Here is an 80-residue protein sequence, read N- to C-terminus: Putative defensin-like protein 15 (80 aa).

The first 29 residues, 1–29, serve as a signal peptide directing secretion; sequence MAKFASIITFIYAALVLFAAFEVPTMVEA. Gln30 carries the pyrrolidone carboxylic acid modification. Disulfide bonds link Cys33/Cys80, Cys44/Cys65, Cys50/Cys74, and Cys54/Cys76.

Belongs to the DEFL family.

The protein localises to the secreted. In terms of biological role, confers broad-spectrum resistance to pathogens. This Arabidopsis thaliana (Mouse-ear cress) protein is Putative defensin-like protein 15 (PDF1.2B).